The primary structure comprises 327 residues: E3 ubiquitin ligase Rnf121 (327 aa).

Residue Ala2 is modified to N-acetylalanine. 5 helical membrane passes run 50-70 (MHAEMVLILIATLVVAQLLLV), 79-99 (SYNMVTLFQMWVVPLYFTVKL), 100-120 (HWWRFLVIWIFFSAVTAFVTF), 148-168 (ATGIVGYMAVMFTLFGLNLLF), and 172-192 (PEDAMDFGISLLFYGLYYGVL). The segment at 226–276 (CAVCGQQIFVDVNEEGIIENTYRLSCNHVFHEFCIRGWCIVGKKQTCPYCK) adopts an RING-type; atypical zinc-finger fold. The helical transmembrane segment at 306-326 (LVAWQPVIIGLVQGISYILGL) threads the bilayer.

Belongs to the RNF121 family.

It is found in the endoplasmic reticulum membrane. The enzyme catalyses S-ubiquitinyl-[E2 ubiquitin-conjugating enzyme]-L-cysteine + [acceptor protein]-L-lysine = [E2 ubiquitin-conjugating enzyme]-L-cysteine + N(6)-ubiquitinyl-[acceptor protein]-L-lysine.. It functions in the pathway protein modification; protein ubiquitination. Its function is as follows. E3 ubiquitin ligase which accepts ubiquitin and transfers it to substrates thereby promoting their degradation by the endoplasmic reticulum-associated degradation (ERAD) pathway which is a pathway involved in ubiquitin-dependent degradation of misfolded endoplasmic reticulum proteins. May regulate the unfolded protein response to reduce endoplasmic reticulum stress. This chain is E3 ubiquitin ligase Rnf121 (Rnf121), found in Mus musculus (Mouse).